Here is a 271-residue protein sequence, read N- to C-terminus: Solute carrier family 66 member 2 (271 aa).

The next 3 membrane-spanning stretches (helical) occupy residues Gly7 to Phe27, Phe49 to Phe69, and His72 to Leu92. Positions His14 to Gln80 constitute a PQ-loop 1 domain. Ser110 is subject to Phosphoserine. A run of 3 helical transmembrane segments spans residues Asp145 to Ile165, Ala168 to Pro188, and Val232 to Ala252. One can recognise a PQ-loop 2 domain in the interval Ala178–Cys233.

It is found in the membrane. This Mus musculus (Mouse) protein is Solute carrier family 66 member 2 (Slc66a2).